The following is a 398-amino-acid chain: uncharacterized protein (398 aa).

6 helical membrane-spanning segments follow: residues 37-57 (LVIL…FVQF), 92-112 (IFNA…FIFG), 122-142 (LLTL…SYIP), 186-206 (LFYG…ILII), 228-248 (IGGI…VIGT), and 268-288 (FGVA…NIVL).

It is found in the cell membrane. This is an uncharacterized protein from Mycoplasma genitalium (strain ATCC 33530 / DSM 19775 / NCTC 10195 / G37) (Mycoplasmoides genitalium).